Here is a 245-residue protein sequence, read N- to C-terminus: Triosephosphate isomerase (245 aa).

4–6 lines the substrate pocket; the sequence is NWK. The active-site Electrophile is histidine 91. Glutamate 161 acts as the Proton acceptor in catalysis. Substrate contacts are provided by residues glycine 167, serine 207, and 228–229; that span reads GG.

This sequence belongs to the triosephosphate isomerase family. In terms of assembly, homodimer.

Its subcellular location is the cytoplasm. The enzyme catalyses D-glyceraldehyde 3-phosphate = dihydroxyacetone phosphate. It participates in carbohydrate biosynthesis; gluconeogenesis. Its pathway is carbohydrate degradation; glycolysis; D-glyceraldehyde 3-phosphate from glycerone phosphate: step 1/1. Functionally, involved in the gluconeogenesis. Catalyzes stereospecifically the conversion of dihydroxyacetone phosphate (DHAP) to D-glyceraldehyde-3-phosphate (G3P). This is Triosephosphate isomerase from Chlorobaculum tepidum (strain ATCC 49652 / DSM 12025 / NBRC 103806 / TLS) (Chlorobium tepidum).